The following is a 389-amino-acid chain: Lipopolysaccharide assembly protein B (389 aa).

Residues 1–20 traverse the membrane as a helical segment; that stretch reads MLELLFLLLPVAAAYGWYMG. Residues 21 to 389 lie on the Cytoplasmic side of the membrane; the sequence is RRSAQQNKQD…IKPIRGLDGL (369 aa). TPR repeat units lie at residues 35–68, 69–102, 107–140, 142–174, 180–213, 214–247, and 249–282; these read LSRD…DTGT, VEAH…ASLT, LLAI…TDFR, GALQ…GKDK, AHFY…DKNS, ARVS…DREL, and SETL…NTGA. 4 residues coordinate Fe cation: cysteine 357, cysteine 360, cysteine 371, and cysteine 374.

This sequence belongs to the LapB family.

It is found in the cell inner membrane. Its function is as follows. Modulates cellular lipopolysaccharide (LPS) levels by regulating LpxC, which is involved in lipid A biosynthesis. May act by modulating the proteolytic activity of FtsH towards LpxC. May also coordinate assembly of proteins involved in LPS synthesis at the plasma membrane. The protein is Lipopolysaccharide assembly protein B of Escherichia coli O157:H7.